Here is a 98-residue protein sequence, read N- to C-terminus: Integration host factor subunit alpha (98 aa).

It belongs to the bacterial histone-like protein family. Heterodimer of an alpha and a beta chain.

Its function is as follows. This protein is one of the two subunits of integration host factor, a specific DNA-binding protein that functions in genetic recombination as well as in transcriptional and translational control. This Glaesserella parasuis serovar 5 (strain SH0165) (Haemophilus parasuis) protein is Integration host factor subunit alpha.